The primary structure comprises 977 residues: Poly(ADP-ribose) glycohydrolase (977 aa).

A disordered region spans residues 1-69 (MSAGPGCEPC…LGRAGQHRGS (69 aa)). Residues 1-457 (MSAGPGCEPC…LSPDKKWLGT (457 aa)) are A-domain. Positions 10–16 (CTKRPRW) match the Nuclear localization signal motif. Residues 17–29 (DAAATSPPAASDA) show a composition bias toward low complexity. The residue at position 69 (Ser69) is a Phosphoserine. The PIP-box (PCNA interacting peptide) signature appears at 77 to 84 (QKTITSWM). Phosphoserine occurs at positions 138 and 198. The interval 184 to 407 (SNANVDQSSP…CRNSKQHGRK (224 aa)) is disordered. Composition is skewed to basic and acidic residues over residues 192–207 (SPKDDHSDTNSEESRD) and 223–234 (TMEDEQGREARS). Thr200 bears the Phosphothreonine mark. Phosphoserine occurs at positions 262, 265, 287, 292, 299, 303, and 317. Polar residues predominate over residues 280 to 291 (NRLNRQESSLGN). The segment covering 317–332 (SEADEETSPGFDEQED) has biased composition (acidic residues). Positions 333-343 (SSSAQTANKPS) are enriched in polar residues. Lys341 bears the N6-acetyllysine mark. Residues 346–356 (QPREADTELRK) are compositionally biased toward basic and acidic residues. Ser449 carries the post-translational modification Phosphoserine. The interval 611-796 (QPIPLLKQKM…TEQYSEYTGY (186 aa)) is catalytic. 727 to 728 (IE) lines the substrate pocket. Asp738 is an active-site residue. Residues Asn741 and Gln755 each contribute to the substrate site. Residues Glu756 and Glu757 contribute to the active site. Substrate contacts are provided by residues Tyr796 and 870 to 875 (NWGCGA).

It belongs to the poly(ADP-ribose) glycohydrolase family. Interacts with PCNA. Interacts with NUDT5.

It is found in the nucleus. The enzyme catalyses [(1''-&gt;2')-ADP-alpha-D-ribose](n) + H2O = [(1''-&gt;2')-ADP-alpha-D-ribose](n-1) + ADP-D-ribose. In terms of biological role, poly(ADP-ribose) glycohydrolase that degrades poly(ADP-ribose) by hydrolyzing the ribose-ribose bonds present in poly(ADP-ribose). PARG acts both as an endo- and exoglycosidase, releasing poly(ADP-ribose) of different length as well as ADP-ribose monomers. It is however unable to cleave the ester bond between the terminal ADP-ribose and ADP-ribosylated residues, leaving proteins that are mono-ADP-ribosylated. Poly(ADP-ribose) is synthesized after DNA damage is only present transiently and is rapidly degraded by PARG. Required to prevent detrimental accumulation of poly(ADP-ribose) upon prolonged replicative stress, while it is not required for recovery from transient replicative stress. Responsible for the prevalence of mono-ADP-ribosylated proteins in cells, thanks to its ability to degrade poly(ADP-ribose) without cleaving the terminal protein-ribose bond. Required for retinoid acid-dependent gene transactivation, probably by removing poly(ADP-ribose) from histone demethylase KDM4D, allowing chromatin derepression at RAR-dependent gene promoters. Involved in the synthesis of ATP in the nucleus, together with PARP1, NMNAT1 and NUDT5. Nuclear ATP generation is required for extensive chromatin remodeling events that are energy-consuming. In Bos taurus (Bovine), this protein is Poly(ADP-ribose) glycohydrolase.